We begin with the raw amino-acid sequence, 267 residues long: MEMO1 family protein MM_1761 (267 aa).

This sequence belongs to the MEMO1 family.

The protein is MEMO1 family protein MM_1761 of Methanosarcina mazei (strain ATCC BAA-159 / DSM 3647 / Goe1 / Go1 / JCM 11833 / OCM 88) (Methanosarcina frisia).